The primary structure comprises 453 residues: Keratin, type I cytoskeletal 15 (453 aa).

The tract at residues 1–102 is head; it reads MATTLLQTSS…GGDGGLLSGN (102 aa). Phosphoserine is present on residues Ser16, Ser17, Ser34, Ser48, and Ser56. Positions 103 to 138 are coil 1A; that stretch reads EKITMQNLNDRLASYLEKVRALEEANADLEVKIRDW. An IF rod domain is found at 103-415; sequence EKITMQNLND…SLLEGQDARM (313 aa). The tract at residues 139 to 157 is linker 1; it reads YQRQSPTSPERDYSPYFKT. The segment at 158–249 is coil 1B; it reads TDELRDKILA…KNHEEEMKEF (92 aa). The tract at residues 250 to 269 is linker 12; it reads SNQLAGQVNVEMDAAPGVDL. The tract at residues 270-411 is coil 2; sequence TRVLSEMREQ…ATYHSLLEGQ (142 aa). Lys298 is covalently cross-linked (Glycyl lysine isopeptide (Lys-Gly) (interchain with G-Cter in SUMO2)). Residues Thr299 and Thr321 each carry the phosphothreonine modification. Residues 412 to 453 form a tail region; that stretch reads DARMAGIGTGEASLGGGGGGKVRINVEESVDGKVVSSRKREI. Lys444 participates in a covalent cross-link: Glycyl lysine isopeptide (Lys-Gly) (interchain with G-Cter in SUMO1); alternate. Lys444 participates in a covalent cross-link: Glycyl lysine isopeptide (Lys-Gly) (interchain with G-Cter in SUMO2); alternate.

The protein belongs to the intermediate filament family. As to quaternary structure, heterotetramer of two type I and two type II keratins. Interacts with NOD2. Expressed in the basal cell layers of several stratified epithelia including esophagus, tongue, stomach, epidermis and hair follicle. In the hair follicle, expression is detected mainly in the basal layer of the outer root sheath (ORS), except just above the follicle bulb where it occurs throughout its thickness. Low expression levels are seen in the single layer of ORS cells around the base of the follicle which increases in the palisade-like cells of the bulb. Also expressed in the basal cells of the sebaceous glands, and expression in the epidermis occurs in a punctate pattern.

The polypeptide is Keratin, type I cytoskeletal 15 (Ovis aries (Sheep)).